The following is a 292-amino-acid chain: ATP synthase gamma chain (292 aa).

The protein belongs to the ATPase gamma chain family. In terms of assembly, F-type ATPases have 2 components, CF(1) - the catalytic core - and CF(0) - the membrane proton channel. CF(1) has five subunits: alpha(3), beta(3), gamma(1), delta(1), epsilon(1). CF(0) has three main subunits: a, b and c.

The protein resides in the cell membrane. Its function is as follows. Produces ATP from ADP in the presence of a proton gradient across the membrane. The gamma chain is believed to be important in regulating ATPase activity and the flow of protons through the CF(0) complex. This Streptococcus suis (strain 05ZYH33) protein is ATP synthase gamma chain.